Reading from the N-terminus, the 441-residue chain is MAGQPEDPSLERHFKGHRDTVTTVDFNPNTKQLASGSMDSCLMIWNMKPQMRAYRFVGHKDAILSVDFSPSGHLIASASRDKTVRLWVPSVKGESTVFKAHTGTVRSVSFSGDGQSLVTASDDKTIKVWTVHRQKFLFSLNQHINWVRCAKFSPDGRLIVSASDDKTIKLWDKTSRECIHSFCEHGGFVNFVDFHPSGTCIAAAATDNTVKVWDIRMNKLIQHYQVHSGVVNSLSFHPSGNYLITASNDSTLKVLDLLEGRLLYTLHGHQGPVTSVKFSREGEFFASGGSDEQVMVWKTNFDSASYADLLKYRQHDQFLNGGDYTSGVPAADRHRPERNAQTDQADDLEPRHIQMSAKDRSSPLSYTSRSIDQHHPQAEDGNLRTVASTLEHIVGQLDILTRTVGILEQRLSLTEDKLKECIDNQQATVSLSHSATKTPSF.

WD repeat units follow at residues 16 to 55 (GHRD…RAYR), 58 to 97 (GHKD…ESTV), 100 to 139 (AHTG…FLFS), 142 to 181 (QHIN…CIHS), 184 to 223 (EHGG…LIQH), 226 to 265 (VHSG…LLYT), and 268 to 307 (GHQG…ASYA). The segment at 323-380 (DYTSGVPAADRHRPERNAQTDQADDLEPRHIQMSAKDRSSPLSYTSRSIDQHHPQAED) is disordered. 3 stretches are compositionally biased toward basic and acidic residues: residues 331–340 (ADRHRPERNA), 348–361 (LEPR…KDRS), and 371–380 (IDQHHPQAED). Positions 400 to 427 (LTRTVGILEQRLSLTEDKLKECIDNQQA) form a coiled coil.

This sequence belongs to the WD repeat POC1 family. Interacts with pat.

It localises to the cytoplasm. The protein localises to the cytoskeleton. Functionally, may play an important role in centriole assembly and/or stability and ciliogenesis. This is POC1 centriolar protein homolog A (poc1a) from Xenopus tropicalis (Western clawed frog).